An 82-amino-acid polypeptide reads, in one-letter code: Small ribosomal subunit protein bS16 (82 aa).

The protein belongs to the bacterial ribosomal protein bS16 family.

This chain is Small ribosomal subunit protein bS16, found in Caldanaerobacter subterraneus subsp. tengcongensis (strain DSM 15242 / JCM 11007 / NBRC 100824 / MB4) (Thermoanaerobacter tengcongensis).